A 1446-amino-acid chain; its full sequence is E3 ubiquitin-protein ligase listerin (1446 aa).

11 HEAT repeats span residues 71–108 (QTRE…LTTD), 115–153 (MLTM…VTNG), 324–361 (SLQK…LLQK), 363–399 (ENPA…TFSD), 413–450 (EILK…WIIE), 630–669 (AENV…AEDE), 684–721 (GDFE…FCDA), 1046–1083 (LRAL…PAFQ), 1107–1144 (SVAR…KLSL), 1165–1202 (LLDL…NALN), and 1251–1289 (FKSM…RLLI). An RING-type zinc finger spans residues 1395–1442 (CTICMMTVHQQTHQLPKIKCKQCKNKFHSNCLYKWFESSNQSTCPLCR).

It belongs to the LTN1 family. As to quaternary structure, component of the ribosome quality control complex (RQC), composed of at least the E3 ubiquitin ligase ltn1 and nemf. The complex probably also contains tcf25 as well as vcp/p97 and its ubiquitin-binding cofactors. RQC forms a stable complex with 60S ribosomal subunits.

The protein resides in the cytoplasm. It localises to the cytosol. The catalysed reaction is S-ubiquitinyl-[E2 ubiquitin-conjugating enzyme]-L-cysteine + [acceptor protein]-L-lysine = [E2 ubiquitin-conjugating enzyme]-L-cysteine + N(6)-ubiquitinyl-[acceptor protein]-L-lysine.. It participates in protein modification; protein ubiquitination. E3 ubiquitin-protein ligase. Component of the ribosome quality control complex (RQC), a ribosome-associated complex that mediates ubiquitination and extraction of incompletely synthesized nascent chains for proteasomal degradation. Ubiquitination leads to vcp/p97 recruitment for extraction and degradation of the incomplete translation product. In Caenorhabditis elegans, this protein is E3 ubiquitin-protein ligase listerin.